The chain runs to 536 residues: Prolyl 3-hydroxylase sudestada1 (536 aa).

The disordered stretch occupies residues 1–35; that stretch reads METSSSSPVKPRRKDKDEDGRAEQEDSADQVGEPH. Residues 14–24 are compositionally biased toward basic and acidic residues; it reads KDKDEDGRAEQ. In terms of domain architecture, Fe2OG dioxygenase spans 165–275; that stretch reads KLDYVSASCS…RLTINGWFHG (111 aa). 2 residues coordinate Fe cation: histidine 185 and aspartate 187. Residue tyrosine 199 participates in 2-oxoglutarate binding. Histidine 254 is a binding site for Fe cation. Arginine 266 contacts 2-oxoglutarate. Positions 467 to 486 are disordered; that stretch reads PTAKAPTDGRRSDYDDEEED.

The protein belongs to the TPA1 family. Monomer. Requires Fe(2+) as cofactor. L-ascorbate serves as cofactor. In terms of tissue distribution, in third-instar larval tissues,highly expressed in the fat body, with significant expression in other organs including the brain, salivary glands, imaginal disks and gut.

The protein resides in the nucleus. It is found in the cytoplasm. It catalyses the reaction [ribosomal protein uS12]-L-proline + 2-oxoglutarate + O2 = [ribosomal protein uS12]-(3S)-3-hydroxy-L-proline + succinate + CO2. Its function is as follows. Prolyl 3-hydroxylase that catalyzes 3-hydroxylation of 'Pro-62' of small ribosomal subunit uS12 (RpS23), thereby regulating protein translation termination efficiency. The chain is Prolyl 3-hydroxylase sudestada1 (sud1) from Drosophila melanogaster (Fruit fly).